The following is a 444-amino-acid chain: Exodeoxyribonuclease 7 large subunit (444 aa).

It belongs to the XseA family. Heterooligomer composed of large and small subunits.

The protein resides in the cytoplasm. The enzyme catalyses Exonucleolytic cleavage in either 5'- to 3'- or 3'- to 5'-direction to yield nucleoside 5'-phosphates.. In terms of biological role, bidirectionally degrades single-stranded DNA into large acid-insoluble oligonucleotides, which are then degraded further into small acid-soluble oligonucleotides. This is Exodeoxyribonuclease 7 large subunit from Xylella fastidiosa (strain M23).